The sequence spans 344 residues: Heat-inducible transcription repressor HrcA (344 aa).

It belongs to the HrcA family.

Negative regulator of class I heat shock genes (grpE-dnaK-dnaJ and groELS operons). Prevents heat-shock induction of these operons. The polypeptide is Heat-inducible transcription repressor HrcA (Anoxybacillus flavithermus (strain DSM 21510 / WK1)).